Reading from the N-terminus, the 149-residue chain is Ricin B-like lectin (149 aa).

Ser2 is subject to N-acetylserine. Asp21, Gly24, Asn39, and Asn47 together coordinate a carbohydrate. Residues 110 to 112 (PNL) form an involved in dimerization region.

Homodimer. In terms of processing, the N-terminus is blocked.

Functionally, lectin specific for terminal, non-reducing N-acetylgalactosamine (Gal-NAc)-containing carbohydrates including N,N'-diacetyllactosediamine/LDN (GalNAcbeta1-4GlcNAc, LacdiNAc). Specific also for carbohydrates containing N-acetylglucosamine (-GlcNAc) or N-acetyllactosamine (-Galbeta1-4GlcNAc) at the reducing end. Agglutinates human blood group A, AB, B and O erythrocytes with a strong preference for group A. Agglutinates bovine erythrocytes with a very low specificity. Binds carbohydrates bivalently, which is required for its biological activity. Exhibits insecticidal activity against the fruit fly D.melanogaster, mosquito A.aegypti, and amoebozoa A.castellanii. Has anti-nutritional activity against Colorado potato beetle L.decemlineata, and against worm C.elegans. Has antiproliferative activity against human leukemic T-cells. Has an immunostimulatory effect on human antigen-presenting dendritic cells, which are subsequently able to induce efficient T-cell immune responses. This Clitocybe nebularis (Clouded agaric) protein is Ricin B-like lectin.